The following is a 761-amino-acid chain: Mitochondrial intermediate peptidase (761 aa).

A mitochondrion-targeting transit peptide spans 1–37; sequence MLIQKILLNKEISRLPRILSILNYTGLRWLSGSSGRN. Histidine 547 provides a ligand contact to Zn(2+). Residue glutamate 548 is part of the active site. Zn(2+) is bound by residues histidine 551 and histidine 554.

This sequence belongs to the peptidase M3 family. Zn(2+) serves as cofactor.

The protein resides in the mitochondrion matrix. It catalyses the reaction Release of an N-terminal octapeptide as second stage of processing of some proteins imported into the mitochondrion.. Cleaves proteins, imported into the mitochondrion, to their mature size. While most mitochondrial precursor proteins are processed to the mature form in one step by mitochondrial processing peptidase (MPP), the sequential cleavage by MIP of an octapeptide after initial processing by MPP is a required step for a subgroup of nuclear-encoded precursor proteins destined for the matrix or the inner membrane. The protein is Mitochondrial intermediate peptidase (OCT1) of Candida glabrata (strain ATCC 2001 / BCRC 20586 / JCM 3761 / NBRC 0622 / NRRL Y-65 / CBS 138) (Yeast).